We begin with the raw amino-acid sequence, 273 residues long: Large ribosomal subunit protein uL2 (273 aa).

2 disordered regions span residues 30 to 50 (YAPL…GRIT) and 221 to 273 (RGTA…RRGK). The span at 253-273 (KGKKTRHNKRTDKFIVRRRGK) shows a compositional bias: basic residues.

It belongs to the universal ribosomal protein uL2 family. As to quaternary structure, part of the 50S ribosomal subunit. Forms a bridge to the 30S subunit in the 70S ribosome.

In terms of biological role, one of the primary rRNA binding proteins. Required for association of the 30S and 50S subunits to form the 70S ribosome, for tRNA binding and peptide bond formation. It has been suggested to have peptidyltransferase activity; this is somewhat controversial. Makes several contacts with the 16S rRNA in the 70S ribosome. The protein is Large ribosomal subunit protein uL2 of Pasteurella multocida (strain Pm70).